We begin with the raw amino-acid sequence, 217 residues long: ITG-like peptide (217 aa).

The N-terminal stretch at Met1–Ala21 is a signal peptide. The propeptide occupies Trp22–Glu208.

In terms of tissue distribution, ITG-like peptide: Expressed in corpora cardiaca (CC), corpora allata (CA), antennal lobe (AL) and gnathal ganglion (GNG) (at protein level). Expression in AL detected in all animals, expression in GNG detected in most animals and in CA and CC detected in few animals (at protein level).

Its subcellular location is the secreted. This is ITG-like peptide from Agrotis ipsilon (Black cutworm moth).